The primary structure comprises 2748 residues: Nuclear migration protein NUM1 (2748 aa).

The span at 1–10 (MSHNNRHKKN) shows a compositional bias: basic residues. Disordered regions lie at residues 1 to 36 (MSHN…VSTN) and 290 to 312 (YYQK…GTTS). Residues 17–36 (AGQYANSIDNSLSQESVSTN) are compositionally biased toward polar residues. A compositionally biased stretch (low complexity) spans 293-304 (KQHTSDTTVTSD). 12 repeat units span residues 593-656 (PSLE…KLEQ), 657-727 (PSLE…EVEQ), 728-798 (PSLA…EVEQ), 799-862 (PSLA…KLEQ), 863-926 (PSLA…KLEQ), 927-990 (PSLA…KLEQ), 991-1054 (PSLE…KLEQ), 1055-1118 (PSLE…KLEQ), 1119-1182 (PSLE…KLEQ), 1183-1246 (PSLA…KLEQ), 1247-1310 (PSLA…KLEQ), and 1311-1374 (PSLE…KLEQ). The segment at 593-1384 (PSLEYLVEHA…PSLEYLVKHA (792 aa)) is 13 X tandem repeats. Phosphoserine is present on residues Ser-611, Ser-675, and Ser-746. Phosphoserine is present on residues Ser-881, Ser-945, and Ser-1009. Phosphoserine is present on residues Ser-1201, Ser-1265, and Ser-1329. The 13; truncated repeat unit spans residues 1375–1384 (PSLEYLVKHA). A disordered region spans residues 2111–2133 (ERAERIDEQSINTTSSNSTTTSS). Residues 2122–2133 (NTTSSNSTTTSS) show a composition bias toward low complexity. A phosphoserine mark is found at Ser-2162, Ser-2164, Ser-2197, Ser-2217, Ser-2220, Ser-2221, Ser-2360, and Ser-2424. Over residues 2444 to 2460 (KEDKKGQATASKHEYVS) the composition is skewed to basic and acidic residues. The disordered stretch occupies residues 2444 to 2536 (KEDKKGQATA…HSSRNTPASR (93 aa)). The segment covering 2465-2474 (NKTSTVSTKS) has biased composition (polar residues). Residues 2492 to 2503 (SESHPQIEEQSH) are compositionally biased toward basic and acidic residues. Position 2494 is a phosphoserine (Ser-2494). Residues 2504 to 2514 (RTNHHKHHKRQ) show a composition bias toward basic residues. The span at 2516–2532 (SLNSNSTSKTTHSSRNT) shows a compositional bias: low complexity. At Ser-2545 the chain carries Phosphoserine. Residues 2573-2683 (QTVIGEYLFK…WYNSLRYLLQ (111 aa)) form the PH domain. The disordered stretch occupies residues 2707–2748 (IFPLPGENTKSSSKRLSASRRSVSTRSLRHRVPQSRSFGNLR). Low complexity predominate over residues 2720 to 2730 (KRLSASRRSVS).

As to quaternary structure, interacts with PAC11 when DYN1 is present, and TUB3.

It localises to the bud tip. Controls nuclear migration. NUM1 specifically controls the interaction of the bud neck cytoskeleton with the pre-divisional G2 nucleus. Functions in dynein-anchoring. During late anaphase forms dynein-interacting cortical microtubule capture sites at both cellular poles. This leads to dynein-dependent sliding of the microtubules in the bud. The polypeptide is Nuclear migration protein NUM1 (NUM1) (Saccharomyces cerevisiae (strain ATCC 204508 / S288c) (Baker's yeast)).